Here is a 235-residue protein sequence, read N- to C-terminus: RAD9, HUS1, RAD1-interacting nuclear orphan protein 1 (235 aa).

The residue at position 50 (S50) is a Phosphoserine. The RAD1-binding motif motif lies at 54 to 60; the sequence is SWVSPQF. Disordered stretches follow at residues 75–106, 111–130, and 149–198; these read HRDQARRPTRRSTCKFPRLTFESPQSSSSETL, RVQPQNSEKDPPRRPLVPLF, and VFAP…LVKD. Residues 96-106 are compositionally biased toward polar residues; the sequence is ESPQSSSSETL. A D-box motif is present at residues 123–130; the sequence is RRPLVPLF. Residues 161–173 are compositionally biased toward basic and acidic residues; the sequence is SVRDDPISPDQKE. Positions 171–175 match the KEN box motif; sequence QKENS.

In terms of assembly, interacts (when phosphorylated by PLK1) with POLQ; promoting POLQ recruitment to DNA damage sites. Interacts with RAD1; interaction is direct and promotes association with the 9-1-1 (RAD9-RAD1-HUS1) complex. Interacts with RAD18. Interacts with TOPBP1. Interacts with UBE2N. Post-translationally, phosphorylated at Ser-50 by PLK1, promoting interaction with polymerase theta (POLQ). Ubiquitinated and degraded by the APC/C complex upon mitotic exit.

The protein localises to the nucleus. It is found in the chromosome. In terms of biological role, involved in microhomology-mediated end-joining (MMEJ) DNA repair by promoting recruitment of polymerase theta (POLQ) to DNA damage sites during mitosis. MMEJ is an alternative non-homologous end-joining (NHEJ) machinery that takes place during mitosis to repair double-strand breaks in DNA that originate in S-phase. Accumulates in M-phase; following phosphorylation by PLK1, interacts with POLQ, enabling its recruitment to double-strand breaks for subsequent repair. Also involved in the DNA damage response (DDR) signaling in response to genotoxic stresses such as ionizing radiation (IR) during the S phase. Recruited to sites of DNA damage through interaction with the 9-1-1 cell-cycle checkpoint response complex and TOPBP1 in a ATR-dependent manner. Required for the progression of the G1 to S phase transition. Plays a role in the stimulation of CHEK1 phosphorylation. The protein is RAD9, HUS1, RAD1-interacting nuclear orphan protein 1 (Rhno1) of Mus musculus (Mouse).